A 769-amino-acid chain; its full sequence is Integrin beta-8 (769 aa).

The N-terminal stretch at 1–42 is a signal peptide; that stretch reads MCGSALAFFTAAFVCLQNDRRGPASFLWAAWVFSLVLGLGQG. Residues 43–684 are Extracellular-facing; sequence EDNRCASSNA…ECFSSPSYLR (642 aa). The PSI domain occupies 46-95; it reads RCASSNAASCARCLALGPECGWCVQEDFISGGSRSERCDIVSNLISKGCS. 25 disulfide bridges follow: Cys47–Cys65, Cys55–Cys469, Cys58–Cys83, Cys68–Cys94, Cys211–Cys218, Cys266–Cys307, Cys407–Cys419, Cys439–Cys467, Cys471–Cys491, Cys471–Cys494, Cys481–Cys494, Cys499–Cys528, Cys511–Cys526, Cys520–Cys531, Cys533–Cys546, Cys553–Cys567, Cys561–Cys572, Cys574–Cys583, Cys585–Cys609, Cys593–Cys607, Cys601–Cys612, Cys614–Cys624, Cys627–Cys630, Cys634–Cys661, and Cys640–Cys657. Residues 146-384 form the VWFA domain; that stretch reads PVDLYYLVDV…NLVVEAYQKL (239 aa). Residues Asp154 and Ser156 each coordinate Mg(2+). Asp193 lines the Ca(2+) pocket. The N-linked (GlcNAc...) asparagine glycan is linked to Asn233. The Ca(2+) site is built by Asn249, Asp251, Pro253, and Glu254. Glu254 is a binding site for Mg(2+). N-linked (GlcNAc...) asparagine glycosylation is present at Asn402. N-linked (GlcNAc...) asparagine glycosylation is found at Asn421, Asn431, Asn456, and Asn466. 4 I-EGF domains span residues 471 to 495, 499 to 547, 548 to 584, and 585 to 625; these read CEDNRGPKGKCVDETFLDSKCFQCD, CHFD…KYCE, KDDFSCPYHHGNLCAGHGECEAGRCQCFSGWEGDRCQ, and CPSA…RFCE. Asn648 carries an N-linked (GlcNAc...) asparagine glycan. A helical transmembrane segment spans residues 685–704; the sequence is IFFIIFIVTFLIGLLKVLII. The Cytoplasmic segment spans residues 705-769; that stretch reads RQVILQWNSN…NAHETFRCNF (65 aa).

The protein belongs to the integrin beta chain family. In terms of assembly, heterodimer of an alpha and a beta subunit. Beta-8 (ITGB8) associates with alpha-V (ITGAV) to form ITGAV:ITGB8. ITGAV:ITGB8 interacts with TGFB1. Placenta, kidney, brain, ovary, uterus and in several transformed cells. Transiently expressed in 293 human embryonic kidney cells.

It localises to the cell membrane. Functionally, integrin alpha-V:beta-8 (ITGAV:ITGB8) is a receptor for fibronectin. It recognizes the sequence R-G-D in its ligands. Integrin alpha-V:beta-6 (ITGAV:ITGB6) mediates R-G-D-dependent release of transforming growth factor beta-1 (TGF-beta-1) from regulatory Latency-associated peptide (LAP), thereby playing a key role in TGF-beta-1 activation on the surface of activated regulatory T-cells (Tregs). Required during vasculogenesis. This is Integrin beta-8 from Homo sapiens (Human).